Here is a 305-residue protein sequence, read N- to C-terminus: tRNA dimethylallyltransferase (305 aa).

ATP is bound at residue 8 to 15 (GPTGTGKS). Residue 10 to 15 (TGTGKS) coordinates substrate.

This sequence belongs to the IPP transferase family. As to quaternary structure, monomer. Mg(2+) serves as cofactor.

The enzyme catalyses adenosine(37) in tRNA + dimethylallyl diphosphate = N(6)-dimethylallyladenosine(37) in tRNA + diphosphate. In terms of biological role, catalyzes the transfer of a dimethylallyl group onto the adenine at position 37 in tRNAs that read codons beginning with uridine, leading to the formation of N6-(dimethylallyl)adenosine (i(6)A). This is tRNA dimethylallyltransferase from Mycobacterium sp. (strain KMS).